The chain runs to 212 residues: MQPQGKMKKPTAEHMINENIPFQKVFVIGANGEKVGVLSTREAIEMAKEQRLDLVLISVQPKPIARILDYGKFKYERKKKQKAAKEKQTVIQNRQIRLTPLIGEHDLNVKARKAKEFLLDGDRIKVSLKFRGRESARPELGHKTLEKFYKAVEDLADIAKEAELVNDRFLDMYLQPNKIKVNKYRKEHNLVDKNSDSQDKSVSEEDTNEGEQ.

Positions 190 to 203 (LVDKNSDSQDKSVS) are enriched in basic and acidic residues. Residues 190–212 (LVDKNSDSQDKSVSEEDTNEGEQ) form a disordered region.

The protein belongs to the IF-3 family. In terms of assembly, monomer.

Its subcellular location is the cytoplasm. Functionally, IF-3 binds to the 30S ribosomal subunit and shifts the equilibrium between 70S ribosomes and their 50S and 30S subunits in favor of the free subunits, thus enhancing the availability of 30S subunits on which protein synthesis initiation begins. This is Translation initiation factor IF-3 from Mycoplasmopsis fermentans (Mycoplasma fermentans).